The following is an 875-amino-acid chain: Phosphoenolpyruvate carboxylase (875 aa).

Active-site residues include H137 and K542.

Belongs to the PEPCase type 1 family. Mg(2+) serves as cofactor.

The catalysed reaction is oxaloacetate + phosphate = phosphoenolpyruvate + hydrogencarbonate. Forms oxaloacetate, a four-carbon dicarboxylic acid source for the tricarboxylic acid cycle. This is Phosphoenolpyruvate carboxylase from Pseudomonas putida (strain ATCC 47054 / DSM 6125 / CFBP 8728 / NCIMB 11950 / KT2440).